The chain runs to 515 residues: Membrane-bound transcription factor site-2 protease (515 aa).

The Cytoplasmic segment spans residues 1-3 (MIP). The chain crosses the membrane as a helical span at residues 4 to 24 (VSLLVVVVGGWTAVYLADLVL). Residues 25–74 (KSSVYFKHSYEDWLENNGLSISPFHIRWQTSIFNRAFYSWGRRKARMLYQ) lie on the Lumenal side of the membrane. The next 2 helical transmembrane spans lie at 75–95 (WFNF…FLLG) and 96–107 (KTLMQTLAQMMA). The Lumenal segment spans residues 108–140 (DSPSPYSSSSSSSSSSSSSSSSSSSLHNEQVLQ). The helical transmembrane segment at 141 to 165 (VVVPGINLPVNQLTYFFAAVLISGV) threads the bilayer. His167 serves as a coordination point for Zn(2+). Glu168 is a catalytic residue. 3 consecutive transmembrane segments (helical) span residues 170–182 (GHGI…QVRF), 183–205 (NGFG…TTHL), and 225–247 (FVLA…PFYY). Residue His171 participates in Zn(2+) binding. The Lumenal portion of the chain corresponds to 248 to 442 (TGVGVLITEV…LPVIVETFVK (195 aa)). A glycan (N-linked (GlcNAc...) asparagine) is linked at Asn333. The next 2 helical transmembrane spans lie at 443-460 (YLIS…VPCF) and 461-472 (ALDGQWILNSFL). Residues 473 to 488 (DATLTSVIGDNDVKDL) lie on the Lumenal side of the membrane. A helical transmembrane segment spans residues 489 to 509 (IGFFILLGGSVLLAANVTLGL). The Cytoplasmic portion of the chain corresponds to 510–515 (WMVTAR).

The protein belongs to the peptidase M50A family. Zn(2+) is required as a cofactor.

The protein resides in the membrane. It localises to the cytoplasm. It is found in the golgi apparatus membrane. It catalyses the reaction Cleaves several transcription factors that are type-2 transmembrane proteins within membrane-spanning domains. Known substrates include sterol regulatory element-binding protein (SREBP) -1, SREBP-2 and forms of the transcriptional activator ATF6. SREBP-2 is cleaved at the site 477-DRSRILL-|-CVLTFLCLSFNPLTSLLQWGGA-505. The residues Asn-Pro, 11 residues distal to the site of cleavage in the membrane-spanning domain, are important for cleavage by S2P endopeptidase. Replacement of either of these residues does not prevent cleavage, but there is no cleavage if both of these residues are replaced.. In terms of biological role, zinc metalloprotease that mediates intramembrane proteolysis of proteins such as ATF6, ATF6B, SREBF1/SREBP1 and SREBF2/SREBP2. Catalyzes the second step in the proteolytic activation of the sterol regulatory element-binding proteins (SREBPs) SREBF1/SREBP1 and SREBF2/SREBP2: cleaves SREBPs within the first transmembrane segment, thereby releasing the N-terminal segment with a portion of the transmembrane segment attached. Mature N-terminal SREBP fragments shuttle to the nucleus and activate gene transcription. Also mediates the second step in the proteolytic activation of the cyclic AMP-dependent transcription factor ATF-6 (ATF6 and ATF6B). Involved in intramembrane proteolysis during bone formation. In astrocytes and osteoblasts, upon DNA damage and ER stress, mediates the second step of the regulated intramembrane proteolytic activation of the transcription factor CREB3L1, leading to the inhibition of cell-cycle progression. This Mus musculus (Mouse) protein is Membrane-bound transcription factor site-2 protease (Mbtps2).